Consider the following 570-residue polypeptide: Acetolactate synthase (570 aa).

Thiamine diphosphate is bound at residue glutamate 60. FAD is bound by residues glutamine 162, phenylalanine 266–aspartate 287, and aspartate 308–aspartate 327. Residues serine 399–threonine 479 form a thiamine pyrophosphate binding region. Residue aspartate 450 coordinates Mg(2+).

Belongs to the TPP enzyme family. The cofactor is Mg(2+). Requires thiamine diphosphate as cofactor.

The catalysed reaction is 2 pyruvate + H(+) = (2S)-2-acetolactate + CO2. Its pathway is polyol metabolism; (R,R)-butane-2,3-diol biosynthesis; (R,R)-butane-2,3-diol from pyruvate: step 1/3. This chain is Acetolactate synthase (alsS), found in Bacillus subtilis (strain 168).